We begin with the raw amino-acid sequence, 874 residues long: MTLQSPLTFRDEQINIGELKQELEKFSSYQKEEFLQHHPVTNLVLSRAEYMDLLLNRLWQHFGFKDIHNISLVAVGGYGRGELHPLSDIDILILSNNKLPNALEAKISEFITLLWDLRLEVGHAVRTVDECAEIGRADLTVATNLQEARLLCGSEDTFQALKKVVLSDSFWPSETFYRAKIQEQRERHARYHDTTYNLEPDIKSTPGGLRDIHTLSWVARRHFGATSLLEMSRYGFLTDAEYRELVECQDILWRVRFALHIELRRYDNRLTFAHQAQVAEHLGYVGEGNRGVEMMMKEFYRTLRRVAELNKMLLKLFDQAIINGGASEDAEIIDEDFQRRGALIEARKPALFQARPETILDMFLHIANDSSIEGVSPPTLRQLRTARRRLNKFLHTIPEAREKFMALCRHPNALHKAFSLMHKLGVLAAYLPQWSQIVGQMQFDLFHVYTVDEHSIRLLKHINTFSYAENHSKHPICCEVYPRIQKKELLILAAIFHDIGKGRGGDHSVIGEGEAYDFCIEHGLSKPEAKLVSWLVRHHLLMSVTAQRRDIYDPDVITEFAKQVRDEEYLEYLVCLTVADICATNPELWNSWKRTLLAELFYSTQRALRRGLENPVDVRERIRHNQQMASAQLRKEGFSAREIEVLWQRFKADYFLRHTHKQIAWHCENLLRMEDTSKPLVLISKKATRGGTEVFVYSPDQPALFATVVAELDRRNFNVHDAQIMTSKDGYVLDTFMVLDQHGKAIEEGRHSAVTKHITHVLEDGRPTKIKTRRTPNKLQHFNVKTKVDFLPTKSKKRTLMEFVALDTPGLLAKVGRTFADLGINLHAAKITTIGERAEDLFILTSEAGGRLSEEQQTELREKLIEKLSDSVSA.

The tract at residues 1 to 332 is uridylyltransferase; that stretch reads MTLQSPLTFR…NGGASEDAEI (332 aa). Residues 333–692 are uridylyl-removing; it reads IDEDFQRRGA…ISKKATRGGT (360 aa). Positions 451 to 573 constitute an HD domain; sequence VDEHSIRLLK…VRDEEYLEYL (123 aa). ACT domains are found at residues 693 to 777 and 800 to 874; these read EVFV…RTPN and LMEF…SVSA.

Belongs to the GlnD family. It depends on Mg(2+) as a cofactor.

It catalyses the reaction [protein-PII]-L-tyrosine + UTP = [protein-PII]-uridylyl-L-tyrosine + diphosphate. It carries out the reaction [protein-PII]-uridylyl-L-tyrosine + H2O = [protein-PII]-L-tyrosine + UMP + H(+). Its activity is regulated as follows. Uridylyltransferase (UTase) activity is inhibited by glutamine, while glutamine activates uridylyl-removing (UR) activity. In terms of biological role, modifies, by uridylylation and deuridylylation, the PII regulatory proteins (GlnB and homologs), in response to the nitrogen status of the cell that GlnD senses through the glutamine level. Under low glutamine levels, catalyzes the conversion of the PII proteins and UTP to PII-UMP and PPi, while under higher glutamine levels, GlnD hydrolyzes PII-UMP to PII and UMP (deuridylylation). Thus, controls uridylylation state and activity of the PII proteins, and plays an important role in the regulation of nitrogen assimilation and metabolism. The sequence is that of Bifunctional uridylyltransferase/uridylyl-removing enzyme from Vibrio campbellii (strain ATCC BAA-1116).